A 379-amino-acid chain; its full sequence is ATP-sensitive inward rectifier potassium channel 10 (379 aa).

Over 1–61 (MTSVAKVYYS…LKDLWTTFID (61 aa)) the chain is Cytoplasmic. Residue Arg36 coordinates 1,2-dioctanoyl-sn-glycero-3-phospho-(1D-myo-inositol-4,5-bisphosphate). The helical transmembrane segment at 62-88 (MQWRYKLLLFSATFAGTWFLFGVVWYL) threads the bilayer. Topologically, residues 89-114 (VAVAHGDLLELDPPANHTPCVVQVHT) are extracellular. An intrachain disulfide couples Cys108 to Cys140. Residues 115 to 131 (LTGAFLFSLESQTTIGY) constitute an intramembrane region (discontinuously helical; Pore-forming). The Selectivity filter motif lies at 128 to 133 (TIGYGF). The Extracellular segment spans residues 132–140 (GFRYISEEC). The chain crosses the membrane as a helical span at residues 141–166 (PLAIVLLIAQLVLTTILEIFITGTFL). At 167–379 (AKIARPKKRA…SALSVRISNV (213 aa)) the chain is on the cytoplasmic side. 1,2-dioctanoyl-sn-glycero-3-phospho-(1D-myo-inositol-4,5-bisphosphate) contacts are provided by Lys168, Arg171, and Lys173. 210-217 (GCQVTGKL) is a binding site for ATP.

It belongs to the inward rectifier-type potassium channel (TC 1.A.2.1) family. KCNJ10 subfamily. Homotetramer. In kidney cells, it forms heteromeric channels with Kir5.1/KCNJ16; this interaction is required for KCNJ16 localization to the basolateral membrane. Interacts with MAGI1, alone and possibly as a heteromer with KCNJ16; this interaction may facilitate KCNJ10/KCNJ16 potassium channel expression at the basolateral membrane in kidney cells. Interacts with PATJ. Expressed in kidney (at protein level). In the nephron, expressed in the distal convoluted tubule, the connecting tubule, the collecting duct and cortical thick ascending limbs.

Its subcellular location is the membrane. It localises to the basolateral cell membrane. The catalysed reaction is K(+)(in) = K(+)(out). With respect to regulation, channel activity is strongly regulated by variations of cytosolic pH; channels are activated by alkaline and inhibited by acidic pH values. Inhibited by Ba(2+) and Cs(+). Activated by phosphatidylinositol 4,5 biphosphate (PtdIns(4,5)P2). May be responsible for potassium buffering action of glial cells in the brain. Inward rectifier potassium channels are characterized by a greater tendency to allow potassium to flow into the cell rather than out of it. Their voltage dependence is regulated by the concentration of extracellular potassium; as external potassium is raised, the voltage range of the channel opening shifts to more positive voltages. The inward rectification is mainly due to the blockage of outward current by internal magnesium. Can be blocked by extracellular barium and cesium. In the kidney, together with KCNJ16, mediates basolateral K(+) recycling in distal tubules; this process is critical for Na(+) reabsorption at the tubules. This Homo sapiens (Human) protein is ATP-sensitive inward rectifier potassium channel 10.